We begin with the raw amino-acid sequence, 1056 residues long: Carbamoyl phosphate synthase large chain (1056 aa).

A carboxyphosphate synthetic domain region spans residues 1–398 (MPRDPSIKKV…AFLKALRSLD (398 aa)). ATP-binding residues include R127, R167, G173, G174, E206, V208, E213, G239, V240, H241, Q282, and E295. Residues 131-324 (RDLMNRIGEP…IARVASKIAI (194 aa)) enclose the ATP-grasp 1 domain. The Mg(2+) site is built by Q282, E295, and N297. Mn(2+)-binding residues include Q282, E295, and N297. The oligomerization domain stretch occupies residues 399 to 532 (TDVEHHTVLS…STYGDKVCEV (134 aa)). A carbamoyl phosphate synthetic domain region spans residues 533–921 (THSDRKKVMI…YKASIAAHNR (389 aa)). One can recognise an ATP-grasp 2 domain in the interval 663 to 854 (SVLLDSLSIP…LAKIAARVMM (192 aa)). Residues R699, R738, L740, E745, G770, V771, H772, S773, Q813, and E825 each contribute to the ATP site. Mg(2+)-binding residues include Q813, E825, and N827. Residues Q813, E825, and N827 each contribute to the Mn(2+) site. The region spanning 920–1056 (NRLPKSGNVF…IEPLQHYIGR (137 aa)) is the MGS-like domain. Residues 922 to 1056 (LPKSGNVFIS…IEPLQHYIGR (135 aa)) form an allosteric domain region.

Belongs to the CarB family. As to quaternary structure, composed of two chains; the small (or glutamine) chain promotes the hydrolysis of glutamine to ammonia, which is used by the large (or ammonia) chain to synthesize carbamoyl phosphate. Tetramer of heterodimers (alpha,beta)4. Requires Mg(2+) as cofactor. Mn(2+) is required as a cofactor.

The enzyme catalyses hydrogencarbonate + L-glutamine + 2 ATP + H2O = carbamoyl phosphate + L-glutamate + 2 ADP + phosphate + 2 H(+). The catalysed reaction is hydrogencarbonate + NH4(+) + 2 ATP = carbamoyl phosphate + 2 ADP + phosphate + 2 H(+). The protein operates within amino-acid biosynthesis; L-arginine biosynthesis; carbamoyl phosphate from bicarbonate: step 1/1. It functions in the pathway pyrimidine metabolism; UMP biosynthesis via de novo pathway; (S)-dihydroorotate from bicarbonate: step 1/3. Large subunit of the glutamine-dependent carbamoyl phosphate synthetase (CPSase). CPSase catalyzes the formation of carbamoyl phosphate from the ammonia moiety of glutamine, carbonate, and phosphate donated by ATP, constituting the first step of 2 biosynthetic pathways, one leading to arginine and/or urea and the other to pyrimidine nucleotides. The large subunit (synthetase) binds the substrates ammonia (free or transferred from glutamine from the small subunit), hydrogencarbonate and ATP and carries out an ATP-coupled ligase reaction, activating hydrogencarbonate by forming carboxy phosphate which reacts with ammonia to form carbamoyl phosphate. This chain is Carbamoyl phosphate synthase large chain, found in Methanospirillum hungatei JF-1 (strain ATCC 27890 / DSM 864 / NBRC 100397 / JF-1).